The primary structure comprises 259 residues: Ribonuclease HII (259 aa).

The 188-residue stretch at 72 to 259 (SYIAGIDEVG…PIKDMIKNKL (188 aa)) folds into the RNase H type-2 domain. A divalent metal cation is bound by residues Asp78, Glu79, and Asp170.

It belongs to the RNase HII family. Requires Mn(2+) as cofactor. The cofactor is Mg(2+).

The protein resides in the cytoplasm. It carries out the reaction Endonucleolytic cleavage to 5'-phosphomonoester.. In terms of biological role, endonuclease that specifically degrades the RNA of RNA-DNA hybrids. The polypeptide is Ribonuclease HII (Bacillus cytotoxicus (strain DSM 22905 / CIP 110041 / 391-98 / NVH 391-98)).